Consider the following 174-residue polypeptide: MYAEYVNQLKNFRIRETQGYNSWCAGYTMSALLNATYNTNRYNAESVMRYLHPNLRGHDFQFTGLTSNEMLRFGRSQGRNTQYLNRMTSYNEVDQLTTNNQGIAVLGKRVESSDGIHAGHAMAVAGNAKVNNGQKVILIWNPWDNGLMTQDAHSNIIPVSNGDHYEWYASIYGY.

Residues C24, H120, and N141 contribute to the active site.

The protein belongs to the peptidase C47 family. Proteolytically cleaved.

Its subcellular location is the secreted. The protein localises to the cell wall. With respect to regulation, inhibited by heavy metal ions such as Zn(2+) or Ni(2+), iodoacetamide, N-ethylmaleimide, leupeptin, SDS and E-64. Also inhibited by chloromethylketones TPCK and TLCK and by human plasma inhibitor alpha-2-macroglobulin. Stimulated by L-cysteine. Functionally, cysteine protease able to cleave elastin, insulin, myoglobin, fibronectin, fibrinogen, HMW-kininogen, alpha-1-protease inhibitor and alpha-1-antitrypsin. Along with other extracellular proteases may contribute to the colonization and infection of human tissues. The protein is Extracellular cysteine protease (ecpA) of Staphylococcus epidermidis.